A 165-amino-acid polypeptide reads, in one-letter code: 2-C-methyl-D-erythritol 2,4-cyclodiphosphate synthase (165 aa).

A divalent metal cation is bound by residues Asp-8 and His-10. 4-CDP-2-C-methyl-D-erythritol 2-phosphate-binding positions include 8–10 (DVH) and 34–35 (HS). His-42 is an a divalent metal cation binding site. Residues 56 to 58 (DIG), 61 to 65 (FPDTD), 100 to 106 (AQAPKMA), 132 to 135 (TTTE), Phe-139, and Arg-142 each bind 4-CDP-2-C-methyl-D-erythritol 2-phosphate.

The protein belongs to the IspF family. As to quaternary structure, homotrimer. The cofactor is a divalent metal cation.

It catalyses the reaction 4-CDP-2-C-methyl-D-erythritol 2-phosphate = 2-C-methyl-D-erythritol 2,4-cyclic diphosphate + CMP. It functions in the pathway isoprenoid biosynthesis; isopentenyl diphosphate biosynthesis via DXP pathway; isopentenyl diphosphate from 1-deoxy-D-xylulose 5-phosphate: step 4/6. In terms of biological role, involved in the biosynthesis of isopentenyl diphosphate (IPP) and dimethylallyl diphosphate (DMAPP), two major building blocks of isoprenoid compounds. Catalyzes the conversion of 4-diphosphocytidyl-2-C-methyl-D-erythritol 2-phosphate (CDP-ME2P) to 2-C-methyl-D-erythritol 2,4-cyclodiphosphate (ME-CPP) with a corresponding release of cytidine 5-monophosphate (CMP). In Pectobacterium atrosepticum (strain SCRI 1043 / ATCC BAA-672) (Erwinia carotovora subsp. atroseptica), this protein is 2-C-methyl-D-erythritol 2,4-cyclodiphosphate synthase.